The primary structure comprises 365 residues: Alanine racemase (365 aa).

The active-site Proton acceptor; specific for D-alanine is the K32. K32 carries the N6-(pyridoxal phosphate)lysine modification. R128 is a substrate binding site. Catalysis depends on Y257, which acts as the Proton acceptor; specific for L-alanine. M305 contacts substrate.

Belongs to the alanine racemase family. Pyridoxal 5'-phosphate serves as cofactor.

The enzyme catalyses L-alanine = D-alanine. The protein operates within amino-acid biosynthesis; D-alanine biosynthesis; D-alanine from L-alanine: step 1/1. Its function is as follows. Catalyzes the interconversion of L-alanine and D-alanine. May also act on other amino acids. This is Alanine racemase (alr) from Francisella tularensis subsp. novicida (strain U112).